The sequence spans 188 residues: MTRASELKKSDVIEVNGTLYAIRQIEVQSPSARGAATLYRVKASAVGGGPKFEERFKGDDDVATVALQRRAVQFSYVDGDDYIFMDNEDFSQYLLKQDDIRDELAFITEETQGVLALKVEESVIGLELPASVVLDVTETTPAMKAASSSARTKPATLNTGLVVQVPEYIVAGEKVRVNTAERKFMSRA.

Belongs to the elongation factor P family.

The protein is Elongation factor P-like protein of Alcanivorax borkumensis (strain ATCC 700651 / DSM 11573 / NCIMB 13689 / SK2).